Here is a 104-residue protein sequence, read N- to C-terminus: MDANNTFDSDLIHAIFKHIWARRFRERERSDAIDATEAEVALGTTKKNRLASANANALKLSCELLKSFVSEAVQRAAIIAEAEGMEKIEATHLERILPQLLLDF.

The protein belongs to the CENP-X/MHF2 family.

The protein localises to the nucleus. Acts in the same pathway as FANCM to restrain class II meiotic crossing over (CO), and acts with FANCM during meiosis to repair interstrand cross-links (ICLs). This Arabidopsis thaliana (Mouse-ear cress) protein is Protein MHF2 homolog.